The sequence spans 124 residues: Fluoride-specific ion channel FluC (124 aa).

A run of 4 helical transmembrane segments spans residues 1–21 (MIGV…LRFA), 34–54 (FYAA…YLYG), 62–82 (VPLA…TTFS), and 101–121 (FSYL…GLIL). Positions 76 and 79 each coordinate Na(+).

The protein belongs to the fluoride channel Fluc/FEX (TC 1.A.43) family.

It localises to the cell inner membrane. It catalyses the reaction fluoride(in) = fluoride(out). Na(+) is not transported, but it plays an essential structural role and its presence is essential for fluoride channel function. In terms of biological role, fluoride-specific ion channel. Important for reducing fluoride concentration in the cell, thus reducing its toxicity. The sequence is that of Fluoride-specific ion channel FluC from Azotobacter vinelandii (strain DJ / ATCC BAA-1303).